Here is a 153-residue protein sequence, read N- to C-terminus: Endoribonuclease YbeY (153 aa).

Positions 118, 122, and 128 each coordinate Zn(2+).

This sequence belongs to the endoribonuclease YbeY family. The cofactor is Zn(2+).

The protein localises to the cytoplasm. Functionally, single strand-specific metallo-endoribonuclease involved in late-stage 70S ribosome quality control and in maturation of the 3' terminus of the 16S rRNA. The chain is Endoribonuclease YbeY from Oenococcus oeni (strain ATCC BAA-331 / PSU-1).